We begin with the raw amino-acid sequence, 141 residues long: Putative pre-16S rRNA nuclease (141 aa).

Belongs to the YqgF nuclease family.

It localises to the cytoplasm. Its function is as follows. Could be a nuclease involved in processing of the 5'-end of pre-16S rRNA. The chain is Putative pre-16S rRNA nuclease from Desulforudis audaxviator (strain MP104C).